A 308-amino-acid polypeptide reads, in one-letter code: MSHSNNFYRLETRLQSQTGKAIGDFGMIEDGDTVLVCMSGGKDSYTMLSVLMALQKRAPIKFKLIAMNLDQKQPGFPEHILPEYLKSVGVEYVIVEADTYSIVKEKVPEGKTTCSLCSRLRRGVIYRTAKELGANKIALGHHRDDIVNTFFLNMFFGGKMKAMPPKLATDDGAHIVIRPLAYCSEKDIASYARAMEFPIIPCNLCGSQENLQRKKVSEMLQEWERQNPGRIDNIFSALRNVVPSHLADTELFPFTGLATGLAKVDEASLFGETTFQQQPLTFAGSLDENRMEFVRFERAPAAEPAGTP.

A PP-loop motif motif is present at residues 39 to 44 (SGGKDS). C114, C117, and C205 together coordinate [4Fe-4S] cluster.

The protein belongs to the TtcA family. Homodimer. The cofactor is Mg(2+). [4Fe-4S] cluster serves as cofactor.

The protein localises to the cytoplasm. It catalyses the reaction cytidine(32) in tRNA + S-sulfanyl-L-cysteinyl-[cysteine desulfurase] + AH2 + ATP = 2-thiocytidine(32) in tRNA + L-cysteinyl-[cysteine desulfurase] + A + AMP + diphosphate + H(+). It participates in tRNA modification. Catalyzes the ATP-dependent 2-thiolation of cytidine in position 32 of tRNA, to form 2-thiocytidine (s(2)C32). The sulfur atoms are provided by the cysteine/cysteine desulfurase (IscS) system. In Cupriavidus taiwanensis (strain DSM 17343 / BCRC 17206 / CCUG 44338 / CIP 107171 / LMG 19424 / R1) (Ralstonia taiwanensis (strain LMG 19424)), this protein is tRNA-cytidine(32) 2-sulfurtransferase.